Consider the following 619-residue polypeptide: Dihydroxy-acid dehydratase (619 aa).

Aspartate 81 is a binding site for Mg(2+). Cysteine 122 contributes to the [2Fe-2S] cluster binding site. 2 residues coordinate Mg(2+): aspartate 123 and lysine 124. N6-carboxylysine is present on lysine 124. Cysteine 195 contributes to the [2Fe-2S] cluster binding site. Residue glutamate 494 coordinates Mg(2+). Residue serine 520 is the Proton acceptor of the active site.

This sequence belongs to the IlvD/Edd family. Homodimer. [2Fe-2S] cluster serves as cofactor. Requires Mg(2+) as cofactor.

The enzyme catalyses (2R)-2,3-dihydroxy-3-methylbutanoate = 3-methyl-2-oxobutanoate + H2O. The catalysed reaction is (2R,3R)-2,3-dihydroxy-3-methylpentanoate = (S)-3-methyl-2-oxopentanoate + H2O. It functions in the pathway amino-acid biosynthesis; L-isoleucine biosynthesis; L-isoleucine from 2-oxobutanoate: step 3/4. It participates in amino-acid biosynthesis; L-valine biosynthesis; L-valine from pyruvate: step 3/4. Functions in the biosynthesis of branched-chain amino acids. Catalyzes the dehydration of (2R,3R)-2,3-dihydroxy-3-methylpentanoate (2,3-dihydroxy-3-methylvalerate) into 2-oxo-3-methylpentanoate (2-oxo-3-methylvalerate) and of (2R)-2,3-dihydroxy-3-methylbutanoate (2,3-dihydroxyisovalerate) into 2-oxo-3-methylbutanoate (2-oxoisovalerate), the penultimate precursor to L-isoleucine and L-valine, respectively. The sequence is that of Dihydroxy-acid dehydratase from Shewanella sp. (strain MR-7).